We begin with the raw amino-acid sequence, 277 residues long: Shikimate dehydrogenase (NADP(+)) (277 aa).

Shikimate is bound by residues Ser15–Ser17 and Thr62. Lys66 serves as the catalytic Proton acceptor. Shikimate is bound by residues Asn87 and Asp102. Residues Gly127 to Ala131, Asn151 to Lys156, and Ile219 contribute to the NADP(+) site. Tyr221 is a binding site for shikimate. Gly242 serves as a coordination point for NADP(+).

This sequence belongs to the shikimate dehydrogenase family. Homodimer.

The enzyme catalyses shikimate + NADP(+) = 3-dehydroshikimate + NADPH + H(+). It functions in the pathway metabolic intermediate biosynthesis; chorismate biosynthesis; chorismate from D-erythrose 4-phosphate and phosphoenolpyruvate: step 4/7. Involved in the biosynthesis of the chorismate, which leads to the biosynthesis of aromatic amino acids. Catalyzes the reversible NADPH linked reduction of 3-dehydroshikimate (DHSA) to yield shikimate (SA). The sequence is that of Shikimate dehydrogenase (NADP(+)) from Bacillus cereus (strain ZK / E33L).